A 446-amino-acid chain; its full sequence is tRNA modification GTPase MnmE (446 aa).

(6S)-5-formyl-5,6,7,8-tetrahydrofolate contacts are provided by Arg22, Glu80, and Lys119. One can recognise a TrmE-type G domain in the interval 215-370 (GLSLVIAGRP…LKKVIKQVVG (156 aa)). Asn225 contributes to the K(+) binding site. GTP-binding positions include 225–230 (NAGKST), 244–250 (TEIAGTT), and 269–272 (DTAG). Ser229 contacts Mg(2+). K(+) is bound by residues Thr244, Ile246, and Thr249. Thr250 provides a ligand contact to Mg(2+). Residue Lys446 participates in (6S)-5-formyl-5,6,7,8-tetrahydrofolate binding.

The protein belongs to the TRAFAC class TrmE-Era-EngA-EngB-Septin-like GTPase superfamily. TrmE GTPase family. Homodimer. Heterotetramer of two MnmE and two MnmG subunits. Requires K(+) as cofactor.

The protein resides in the cytoplasm. Its function is as follows. Exhibits a very high intrinsic GTPase hydrolysis rate. Involved in the addition of a carboxymethylaminomethyl (cmnm) group at the wobble position (U34) of certain tRNAs, forming tRNA-cmnm(5)s(2)U34. This chain is tRNA modification GTPase MnmE, found in Legionella pneumophila (strain Paris).